We begin with the raw amino-acid sequence, 192 residues long: uncharacterized protein (192 aa).

The protein belongs to the CAPAB/TerDEXZ family.

This is an uncharacterized protein from Bacillus subtilis (strain 168).